The primary structure comprises 1367 residues: Collagen alpha-1(XV) chain (1367 aa).

Positions 1–31 (MTHRRTAQGRRPRWLLSIISALLSAVLQTRA) are cleaved as a signal peptide. Positions 54–249 (SVSFTTGYGG…SSASGEASGF (196 aa)) constitute a Laminin G-like domain. Residues 229-604 (RTPEELCEAQ…DIVGNEDLLR (376 aa)) are nonhelical region 1 (NC1). O-linked (Xyl...) (chondroitin sulfate) serine glycosylation is found at S243 and S247. A disordered region spans residues 267–319 (APPKESHVDPISVPPTSSSPAEDSELSGEPVPEGTPETNLSIIGHSSPEQGSG). N305 and N323 each carry an N-linked (GlcNAc...) asparagine glycan. Residue S341 is glycosylated (O-linked (Xyl...) (chondroitin sulfate) serine). Residues N348, N375, and N402 are each glycosylated (N-linked (GlcNAc...) asparagine). Disordered stretches follow at residues 396–446 (DTPD…SHGE) and 529–784 (TAEP…GHVE). Residues 402 to 429 (NLTTTASGDGEVPTSTDGDTEADSSPTG) are compositionally biased toward polar residues. Basic and acidic residues predominate over residues 434-446 (KPREEATLGSHGE). Residues 555–564 (PSGPPLPTPT) show a composition bias toward pro residues. Gly residues predominate over residues 582-595 (GPVGGLDEGSGSGD). Collagen-like domains follow at residues 605 to 665 (GPPG…GMKG) and 666 to 717 (EKGA…PPGP). Positions 605-718 (GPPGPPGPPG…PGPPGPPGPG (114 aa)) are triple-helical region 1 (COL1). Residues 606–616 (PPGPPGPPGSP) show a composition bias toward pro residues. N673 is a glycosylation site (N-linked (GlcNAc...) asparagine). Residues 703–717 (MGPPGPPGPPGPPGP) are compositionally biased toward pro residues. Positions 719–748 (CTTELGFEIEGSGDVRLLSKPTISGPTSPS) are nonhelical region 2 (NC2). A glycan (O-linked (Xyl...) (chondroitin sulfate) serine) is linked at S730. Residues 737–750 (SKPTISGPTSPSGP) show a composition bias toward low complexity. A triple-helical region 2 (COL2) region spans residues 749 to 783 (GPKGEKGEQGAKGERGADGTSTMGPPGPRGPPGHV). Residues 751–765 (KGEKGEQGAKGERGA) show a composition bias toward basic and acidic residues. Residues 784–807 (EVLSSSLINITNGSMNFSDIPELM) are nonhelical region 3 (NC3). N-linked (GlcNAc...) asparagine glycans are attached at residues N792, N795, and N799. Collagen-like domains follow at residues 808–850 (GPPG…GEPG) and 863–912 (KGRK…GDRG). The segment at 808-852 (GPPGPDGVPGLPGFPGPRGPKGDTGVPGFPGLKGEQGEKGEPGAI) is triple-helical region 3 (COL3). The tract at residues 853–863 (LTGDVPLEMMK) is nonhelical region 4 (NC4). The triple-helical region 4 (COL4) stretch occupies residues 864–934 (GRKGEPGIHG…PGPPGPPGAV (71 aa)). The disordered stretch occupies residues 905-930 (KGAKGDRGVTLPGPPGLPGPPGPPGP). Residues 916–930 (PGPPGLPGPPGPPGP) show a composition bias toward pro residues. Positions 935-968 (VNIKGAVFPIPARPHCKTPVGTAHPGDPELVTFH) are nonhelical region 5 (NC5). The triple-helical region 5 (COL5) stretch occupies residues 969-998 (GVKGEKGSWGLPGSKGEKGDQGAQGPPGPP). Disordered stretches follow at residues 974 to 1000 (KGSW…PPVD) and 1055 to 1089 (GPPG…PAIL). Positions 999-1031 (VDPAYLRHFLNSLKGENEDASFRGESSNNLFVS) are nonhelical region 6 (NC6). The segment at 1032-1086 (GPPGLPGYPGLVGQKGEAVVGPQGPPGIPGLPGPPGFGRPGVPGPPGPPGPPGPP) is triple-helical region 6 (COL6). Residues 1055–1086 (GPPGIPGLPGPPGFGRPGVPGPPGPPGPPGPP) are compositionally biased toward pro residues. The interval 1087-1096 (AILGAAVALP) is nonhelical region 7 (NC7). The interval 1097–1111 (GPPGPPGQPGLPGSR) is triple-helical region 7 (COL7). The interval 1112-1367 (NLVTALSDMG…ENSFMTDTRK (256 aa)) is nonhelical region 8 (NC8). Intrachain disulfides connect C1216-C1356 and C1318-C1348.

It belongs to the multiplexin collagen family. As to quaternary structure, trimer; disulfide-linked. Interacts moderately with EFEMP2. Post-translationally, prolines at the third position of the tripeptide repeating unit (G-X-Y) are hydroxylated in some or all of the chains. O-glycosylated; contains chondroitin sulfate. Detected in testis, brain, heart, kidney, skeletal muscle and skin (at protein level). Detected in heart and skeletal muscle.

It is found in the secreted. Its subcellular location is the extracellular space. It localises to the extracellular matrix. Structural protein that stabilizes microvessels and muscle cells, both in heart and in skeletal muscle. In terms of biological role, restin potently inhibits angiogenesis. In Mus musculus (Mouse), this protein is Collagen alpha-1(XV) chain (Col15a1).